Consider the following 189-residue polypeptide: Cancer/testis antigen family 45 member A2 (189 aa).

This sequence belongs to the CT45 family. Testis specific. Expressed in cancer cell lines.

The polypeptide is Cancer/testis antigen family 45 member A2 (Homo sapiens (Human)).